A 278-amino-acid chain; its full sequence is Large ribosomal subunit protein uL2 (278 aa).

Disordered stretches follow at residues Met-1–His-58 and Gly-210–Arg-278. The span at Glu-23 to Leu-33 shows a compositional bias: basic and acidic residues. Residues Ser-40–Ile-49 are compositionally biased toward low complexity. 2 stretches are compositionally biased toward basic residues: residues Gly-210 to Ser-220 and Val-269 to Arg-278.

This sequence belongs to the universal ribosomal protein uL2 family. Part of the 50S ribosomal subunit. Forms a bridge to the 30S subunit in the 70S ribosome.

One of the primary rRNA binding proteins. Required for association of the 30S and 50S subunits to form the 70S ribosome, for tRNA binding and peptide bond formation. It has been suggested to have peptidyltransferase activity; this is somewhat controversial. Makes several contacts with the 16S rRNA in the 70S ribosome. The polypeptide is Large ribosomal subunit protein uL2 (Beutenbergia cavernae (strain ATCC BAA-8 / DSM 12333 / CCUG 43141 / JCM 11478 / NBRC 16432 / NCIMB 13614 / HKI 0122)).